A 437-amino-acid chain; its full sequence is Indole diterpene prenyltransferase anaPT (437 aa).

Residues 1–28 are disordered; it reads MSPLSMQTDSVQGTAENKSLETNGTSND. L-tryptophan-binding positions include 102–103 and Glu111; that span reads GF. Positions 124, 208, 210, 282, 355, 357, 422, and 426 each coordinate dimethylallyl diphosphate.

The protein belongs to the tryptophan dimethylallyltransferase family.

It carries out the reaction (R)-benzodiazepinedione + dimethylallyl diphosphate = (2R,3S,11R)-aszonalenin + diphosphate. The catalysed reaction is (S)-benzodiazepinedione + dimethylallyl diphosphate = (2R,3S,11S)-aszonalenin + diphosphate. The protein operates within alkaloid biosynthesis. Its function is as follows. Indole diterpene prenyltransferase; part of the gene cluster that mediates the biosynthesis of the prenylated pyrroloindoline diketopiperazine acetylaszonalenin. The first step in the pathway is the formation of (R)-benzodiazepinedione by condensation of tryptophan and anthranilic acid catalyzed by the non-ribosomal peptide synthetase anaPS. The prenyltransferase anaPT then converts (R)-benzodiazepinedione to aszonalenin in the presence of dimethylallyl diphosphate (DMAPP) via C3-prenylation. The last step in the biosynthesis of acetylaszonalenin via acetylation of aszonalenin at position N1 catalyzed by anaAT. The sequence is that of Indole diterpene prenyltransferase anaPT from Neosartorya fischeri (strain ATCC 1020 / DSM 3700 / CBS 544.65 / FGSC A1164 / JCM 1740 / NRRL 181 / WB 181) (Aspergillus fischerianus).